Consider the following 259-residue polypeptide: MEIVIRQTPSEVGTTVADIVEGYVRRGPTTLGLATGSSPLGSYRELARRHRESGLDFSDARAFLLDEYVGLPKSHGQSYFSVIRSEFVDHVNLDPGHVLSPDGESSDIAEEGARYDAAIAEAGGIDVQLLGIGTDGHIGFNEPGSALTSRTRVKTLTEQTRLDNARFFDSVDDVPHHVLTQGLGTISEARHLVMIAFGKGKAEAIAAAAEGPLSAFCPASVMQLHRHVTVVIDEAAASKLQLADYYRYALEHKPSWQSF.

The active-site Proton acceptor; for enolization step is Asp66. The For ring-opening step role is filled by Asp135. His137 (proton acceptor; for ring-opening step) is an active-site residue. The For ring-opening step role is filled by Glu142.

This sequence belongs to the glucosamine/galactosamine-6-phosphate isomerase family. NagB subfamily.

It catalyses the reaction alpha-D-glucosamine 6-phosphate + H2O = beta-D-fructose 6-phosphate + NH4(+). The protein operates within amino-sugar metabolism; N-acetylneuraminate degradation; D-fructose 6-phosphate from N-acetylneuraminate: step 5/5. Functionally, catalyzes the reversible isomerization-deamination of glucosamine 6-phosphate (GlcN6P) to form fructose 6-phosphate (Fru6P) and ammonium ion. The polypeptide is Glucosamine-6-phosphate deaminase (Rhodococcus opacus (strain B4)).